The following is a 203-amino-acid chain: Probable chemoreceptor glutamine deamidase CheD (203 aa).

It belongs to the CheD family.

The catalysed reaction is L-glutaminyl-[protein] + H2O = L-glutamyl-[protein] + NH4(+). Its function is as follows. Probably deamidates glutamine residues to glutamate on methyl-accepting chemotaxis receptors (MCPs), playing an important role in chemotaxis. This Herminiimonas arsenicoxydans protein is Probable chemoreceptor glutamine deamidase CheD.